The sequence spans 160 residues: Cytochrome b6-f complex subunit 4 (160 aa).

3 consecutive transmembrane segments (helical) span residues Leu36–Val56, Leu95–Glu115, and Ala131–Ile151.

The protein belongs to the cytochrome b family. PetD subfamily. In terms of assembly, the 4 large subunits of the cytochrome b6-f complex are cytochrome b6, subunit IV (17 kDa polypeptide, PetD), cytochrome f and the Rieske protein, while the 4 small subunits are PetG, PetL, PetM and PetN. The complex functions as a dimer.

It localises to the cellular thylakoid membrane. Functionally, component of the cytochrome b6-f complex, which mediates electron transfer between photosystem II (PSII) and photosystem I (PSI), cyclic electron flow around PSI, and state transitions. The protein is Cytochrome b6-f complex subunit 4 of Trichodesmium erythraeum (strain IMS101).